The sequence spans 174 residues: Translation initiation factor IF-3 (174 aa).

The protein belongs to the IF-3 family. As to quaternary structure, monomer.

It localises to the cytoplasm. Its function is as follows. IF-3 binds to the 30S ribosomal subunit and shifts the equilibrium between 70S ribosomes and their 50S and 30S subunits in favor of the free subunits, thus enhancing the availability of 30S subunits on which protein synthesis initiation begins. The polypeptide is Translation initiation factor IF-3 (Azorhizobium caulinodans (strain ATCC 43989 / DSM 5975 / JCM 20966 / LMG 6465 / NBRC 14845 / NCIMB 13405 / ORS 571)).